The following is a 108-amino-acid chain: Anti-sigma-B factor antagonist (108 aa).

An STAS domain is found at 3 to 108 (LNIETITHDD…MHVNEGTEVE (106 aa)). Ser-57 carries the phosphoserine modification.

It belongs to the anti-sigma-factor antagonist family. Phosphorylated by RsbW on a serine residue.

In terms of biological role, positive regulator of sigma-B activity. Non-phosphorylated RsbV binds to RsbW, preventing its association with sigma-B. When phosphorylated, releases RsbW, which is then free to complex with and inactivate sigma-B. The protein is Anti-sigma-B factor antagonist (rsbV) of Staphylococcus epidermidis.